The chain runs to 299 residues: CCR4-NOT transcription complex subunit 9 (299 aa).

This sequence belongs to the CNOT9 family. In terms of assembly, homodimer. Component of the CCR4-NOT complex.

It localises to the nucleus. The protein localises to the cytoplasm. It is found in the P-body. In terms of biological role, component of the CCR4-NOT complex which is one of the major cellular mRNA deadenylases and is linked to various cellular processes including bulk mRNA degradation, miRNA-mediated repression, translational repression during translational initiation and general transcription regulation. Additional complex functions may be a consequence of its influence on mRNA expression. Involved in down-regulation of MYB- and JUN-dependent transcription. Enhances ligand-dependent transcriptional activity of nuclear hormone receptors. May play a role in cell differentiation. In Xenopus tropicalis (Western clawed frog), this protein is CCR4-NOT transcription complex subunit 9.